Consider the following 138-residue polypeptide: Large ribosomal subunit protein uL16 (138 aa).

The segment covering methionine 1–alanine 21 has biased composition (basic residues). The tract at residues methionine 1 to lysine 22 is disordered.

Belongs to the universal ribosomal protein uL16 family. In terms of assembly, part of the 50S ribosomal subunit.

Functionally, binds 23S rRNA and is also seen to make contacts with the A and possibly P site tRNAs. The chain is Large ribosomal subunit protein uL16 from Thermobifida fusca (strain YX).